Reading from the N-terminus, the 328-residue chain is D-cysteine desulfhydrase (328 aa).

N6-(pyridoxal phosphate)lysine is present on lysine 51.

It belongs to the ACC deaminase/D-cysteine desulfhydrase family. In terms of assembly, homodimer. It depends on pyridoxal 5'-phosphate as a cofactor.

It carries out the reaction D-cysteine + H2O = hydrogen sulfide + pyruvate + NH4(+) + H(+). In terms of biological role, catalyzes the alpha,beta-elimination reaction of D-cysteine and of several D-cysteine derivatives. It could be a defense mechanism against D-cysteine. This Klebsiella pneumoniae subsp. pneumoniae (strain ATCC 700721 / MGH 78578) protein is D-cysteine desulfhydrase.